The primary structure comprises 366 residues: Ribosome-binding ATPase YchF (366 aa).

One can recognise an OBG-type G domain in the interval 3-259 (LTAGIVGLPN…LEGEEKQMFL (257 aa)). ATP is bound at residue 12–17 (NVGKST). Residues Ser16 and Thr36 each contribute to the Mg(2+) site. Residues 281–364 (GLATYFTAGE…QDGDVIHFRF (84 aa)) form the TGS domain.

It belongs to the TRAFAC class OBG-HflX-like GTPase superfamily. OBG GTPase family. YchF/OLA1 subfamily. It depends on Mg(2+) as a cofactor.

ATPase that binds to both the 70S ribosome and the 50S ribosomal subunit in a nucleotide-independent manner. This chain is Ribosome-binding ATPase YchF, found in Bacillus subtilis (strain 168).